The following is a 225-amino-acid chain: NAD(P)H-hydrate epimerase (225 aa).

The 201-residue stretch at 9-209 folds into the YjeF N-terminal domain; it reads MQTIDNYTVE…DIGLLTPQDF (201 aa). 57 to 61 provides a ligand contact to (6S)-NADPHX; the sequence is NNGAD. The K(+) site is built by asparagine 58 and aspartate 119. Residues 123–129 and aspartate 152 contribute to the (6S)-NADPHX site; that span reads GTGLNNL. Threonine 155 lines the K(+) pocket.

The protein belongs to the NnrE/AIBP family. K(+) is required as a cofactor.

The catalysed reaction is (6R)-NADHX = (6S)-NADHX. It catalyses the reaction (6R)-NADPHX = (6S)-NADPHX. In terms of biological role, catalyzes the epimerization of the S- and R-forms of NAD(P)HX, a damaged form of NAD(P)H that is a result of enzymatic or heat-dependent hydration. This is a prerequisite for the S-specific NAD(P)H-hydrate dehydratase to allow the repair of both epimers of NAD(P)HX. In Leuconostoc kimchii (strain IMSNU 11154 / KCTC 2386 / IH25), this protein is NAD(P)H-hydrate epimerase.